Consider the following 331-residue polypeptide: Anthranilate phosphoribosyltransferase (331 aa).

Residues Gly78, 81-82, Thr86, 88-91, 106-114, and Ser118 each bind 5-phospho-alpha-D-ribose 1-diphosphate; these read GD, NVST, and KHGNYSVSS. Residue Gly78 coordinates anthranilate. Ser90 lines the Mg(2+) pocket. Asn109 serves as a coordination point for anthranilate. Arg164 is a binding site for anthranilate. Asp222 and Glu223 together coordinate Mg(2+).

The protein belongs to the anthranilate phosphoribosyltransferase family. As to quaternary structure, homodimer. Mg(2+) serves as cofactor.

It catalyses the reaction N-(5-phospho-beta-D-ribosyl)anthranilate + diphosphate = 5-phospho-alpha-D-ribose 1-diphosphate + anthranilate. The protein operates within amino-acid biosynthesis; L-tryptophan biosynthesis; L-tryptophan from chorismate: step 2/5. Catalyzes the transfer of the phosphoribosyl group of 5-phosphorylribose-1-pyrophosphate (PRPP) to anthranilate to yield N-(5'-phosphoribosyl)-anthranilate (PRA). This chain is Anthranilate phosphoribosyltransferase, found in Haloarcula marismortui (strain ATCC 43049 / DSM 3752 / JCM 8966 / VKM B-1809) (Halobacterium marismortui).